The chain runs to 606 residues: Leucine-rich repeat and immunoglobulin-like domain-containing nogo receptor-interacting protein 1 (606 aa).

An N-terminal signal peptide occupies residues 1–27 (MILQLPSCLCPILLIVVGSILSGSASG). Intrachain disulfides connect Cys-28–Cys-34 and Cys-32–Cys-43. Positions 28–57 (CPQRCDCSPQDRSVLCHRKRYLDVPEGIPT) constitute an LRRNT domain. The Extracellular portion of the chain corresponds to 28-547 (CPQRCDCSPQ…FDIKTLIIAT (520 aa)). 11 LRR repeats span residues 58–79 (DTRL…EFSA), 82–103 (YLEE…AFNG), 106–127 (NLRS…VFTG), 130–151 (NLTQ…MFQD), 154–175 (NLKS…AFRG), 178–199 (SLEE…ALSH), 202–223 (GLIT…SFKR), 250–271 (NLTS…AIRH), 274–295 (YLRF…MLYE), 298–319 (RLQE…AFRG), and 322–343 (HLKV…SFHS). Residue Asn-130 is glycosylated (N-linked (GlcNAc...) asparagine). A glycan (N-linked (GlcNAc...) asparagine) is linked at Asn-188. N-linked (GlcNAc...) asparagine glycosylation is found at Asn-250, Asn-260, and Asn-279. 7 N-linked (GlcNAc...) asparagine glycosylation sites follow: Asn-327, Asn-374, Asn-478, Asn-491, Asn-512, Asn-523, and Asn-528. The 55-residue stretch at 355 to 409 (NPLACDCRLLWIFRRRWRLNFSRQQPSCSSPEYVQGKEFKDFPDVLQPNYFTCRR) folds into the LRRCT domain. 3 cysteine pairs are disulfide-bonded: Cys-359–Cys-382, Cys-361–Cys-407, and Cys-432–Cys-483. Positions 397–496 (PDVLQPNYFT…NAGGNDTSLA (100 aa)) constitute an Ig-like C2-type domain. The chain crosses the membrane as a helical span at residues 548–568 (TMGFISFLGVVLFCLVLLFLW). The Cytoplasmic segment spans residues 569–606 (SRGKGNTKHNIEIEYVPRKSDAGLSSADAPRKFNMKMI).

The protein localises to the cell membrane. In terms of biological role, may play a role in regulating axonal regeneration and plasticity in the adult central nervous system. The protein is Leucine-rich repeat and immunoglobulin-like domain-containing nogo receptor-interacting protein 1 (lingo1) of Xenopus tropicalis (Western clawed frog).